Here is a 705-residue protein sequence, read N- to C-terminus: Elongation factor G (705 aa).

The tr-type G domain occupies 7 to 287; the sequence is HLTRNIGIMA…YVCAFLPSPL (281 aa). Residues 16 to 23, 84 to 88, and 138 to 141 contribute to the GTP site; these read AHIDAGKT, DTPGH, and NKMD. The segment at 293–312 is disordered; the sequence is VGTNPTTGAEEDRKPSEDEK. The segment covering 302–312 has biased composition (basic and acidic residues); the sequence is EEDRKPSEDEK.

Belongs to the TRAFAC class translation factor GTPase superfamily. Classic translation factor GTPase family. EF-G/EF-2 subfamily.

It is found in the cytoplasm. Its function is as follows. Catalyzes the GTP-dependent ribosomal translocation step during translation elongation. During this step, the ribosome changes from the pre-translocational (PRE) to the post-translocational (POST) state as the newly formed A-site-bound peptidyl-tRNA and P-site-bound deacylated tRNA move to the P and E sites, respectively. Catalyzes the coordinated movement of the two tRNA molecules, the mRNA and conformational changes in the ribosome. This Phocaeicola vulgatus (strain ATCC 8482 / DSM 1447 / JCM 5826 / CCUG 4940 / NBRC 14291 / NCTC 11154) (Bacteroides vulgatus) protein is Elongation factor G.